The primary structure comprises 517 residues: L-amino-acid oxidase (517 aa).

The first 18 residues, 1–18 (MNVFFMFSLLFLAALESC), serve as a signal peptide directing secretion. Cys29 and Cys192 are joined by a disulfide. FAD-binding positions include 62–63 (MA), 82–83 (EA), Arg90, and 106–109 (GPMR). Arg109 is a binding site for substrate. The N-linked (GlcNAc...) asparagine glycan is linked to Asn191. Position 280 (Val280) interacts with FAD. Cysteines 350 and 431 form a disulfide. N-linked (GlcNAc...) asparagine glycosylation is present at Asn380. Residue Tyr391 participates in substrate binding. FAD is bound by residues Glu476 and 483 to 488 (GWLDST). Substrate is bound at residue 483-484 (GW).

It belongs to the flavin monoamine oxidase family. FIG1 subfamily. In terms of assembly, homodimer; non-covalently linked. Requires FAD as cofactor. In terms of processing, N-glycosylated. In terms of tissue distribution, expressed by the venom gland.

It is found in the secreted. It carries out the reaction an L-alpha-amino acid + O2 + H2O = a 2-oxocarboxylate + H2O2 + NH4(+). In terms of biological role, catalyzes an oxidative deamination of predominantly hydrophobic and aromatic L-amino acids, thus producing hydrogen peroxide that may contribute to the diverse toxic effects of this enzyme. Exhibits diverse biological activities, such as hemorrhage, hemolysis, edema, apoptosis of vascular endothelial cells or tumor cell lines, antibacterial and antiparasitic activities, as well as regulation of platelet aggregation. Effects of snake L-amino oxidases on platelets are controversial, since they either induce aggregation or inhibit agonist-induced aggregation. These different effects are probably due to different experimental conditions. This Notechis scutatus scutatus (Mainland tiger snake) protein is L-amino-acid oxidase.